Reading from the N-terminus, the 117-residue chain is Large ribosomal subunit protein bL20c (117 aa).

The protein belongs to the bacterial ribosomal protein bL20 family.

Its subcellular location is the plastid. It is found in the chloroplast. Functionally, binds directly to 23S ribosomal RNA and is necessary for the in vitro assembly process of the 50S ribosomal subunit. It is not involved in the protein synthesizing functions of that subunit. The protein is Large ribosomal subunit protein bL20c (rpl20) of Arabidopsis thaliana (Mouse-ear cress).